Consider the following 250-residue polypeptide: 5'/3'-nucleotidase SurE (250 aa).

A divalent metal cation is bound by residues aspartate 9, aspartate 10, serine 40, and asparagine 93.

This sequence belongs to the SurE nucleotidase family. The cofactor is a divalent metal cation.

Its subcellular location is the cytoplasm. The enzyme catalyses a ribonucleoside 5'-phosphate + H2O = a ribonucleoside + phosphate. It catalyses the reaction a ribonucleoside 3'-phosphate + H2O = a ribonucleoside + phosphate. The catalysed reaction is [phosphate](n) + H2O = [phosphate](n-1) + phosphate + H(+). Its function is as follows. Nucleotidase with a broad substrate specificity as it can dephosphorylate various ribo- and deoxyribonucleoside 5'-monophosphates and ribonucleoside 3'-monophosphates with highest affinity to 3'-AMP. Also hydrolyzes polyphosphate (exopolyphosphatase activity) with the preference for short-chain-length substrates (P20-25). Might be involved in the regulation of dNTP and NTP pools, and in the turnover of 3'-mononucleotides produced by numerous intracellular RNases (T1, T2, and F) during the degradation of various RNAs. The sequence is that of 5'/3'-nucleotidase SurE from Yersinia enterocolitica serotype O:8 / biotype 1B (strain NCTC 13174 / 8081).